Reading from the N-terminus, the 419-residue chain is 26S proteasome regulatory subunit 8 homolog A (419 aa).

The residue at position 2 (alanine 2) is an N-acetylalanine. Glycine 202 to threonine 209 is a binding site for ATP. Residue lysine 406 forms a Glycyl lysine isopeptide (Lys-Gly) (interchain with G-Cter in ubiquitin) linkage.

The protein belongs to the AAA ATPase family. Component of the 19S regulatory particle (RP/PA700) base subcomplex of the 26S proteasome. The 26S proteasome is composed of a core protease (CP), known as the 20S proteasome, capped at one or both ends by the 19S regulatory particle (RP/PA700). The RP/PA700 complex is composed of at least 17 different subunits in two subcomplexes, the base and the lid, which form the portions proximal and distal to the 20S proteolytic core, respectively.

Its subcellular location is the cytoplasm. It localises to the nucleus. The 26S proteasome is involved in the ATP-dependent degradation of ubiquitinated proteins. The regulatory (or ATPase) complex confers ATP dependency and substrate specificity to the 26S complex. In Arabidopsis thaliana (Mouse-ear cress), this protein is 26S proteasome regulatory subunit 8 homolog A (RPT6A).